Reading from the N-terminus, the 37-residue chain is LQVSRDVWLLSQPHLRDDHHAKQLSDWCVSLFAARSP.

This sequence belongs to the LysR transcriptional regulatory family.

In terms of biological role, transcriptional activator of the mau genes involved in methylamine metabolism. The chain is Mau operon transcriptional activator (mauR) from Paracoccus versutus (Thiobacillus versutus).